Reading from the N-terminus, the 147-residue chain is Acidic phospholipase A2 beta-bungarotoxin A4 chain (147 aa).

An N-terminal signal peptide occupies residues 1–19; that stretch reads MNPAHLLVLSAVCVSLLGA. The propeptide occupies 20 to 27; that stretch reads ANIPPQHL. 6 cysteine pairs are disulfide-bonded: cysteine 54–cysteine 146, cysteine 56–cysteine 72, cysteine 71–cysteine 127, cysteine 78–cysteine 120, cysteine 88–cysteine 113, and cysteine 106–cysteine 118. Ca(2+) is bound by residues tyrosine 55, glycine 57, and glycine 59. Histidine 75 is a catalytic residue. Aspartate 76 serves as a coordination point for Ca(2+). Aspartate 121 is a catalytic residue.

It belongs to the phospholipase A2 family. Group I subfamily. D49 sub-subfamily. Heterodimer; disulfide-linked. The A chains have phospholipase A2 activity and the B chains show homology with the basic protease inhibitors. Ca(2+) is required as a cofactor. Expressed by the venom gland.

It is found in the secreted. It carries out the reaction a 1,2-diacyl-sn-glycero-3-phosphocholine + H2O = a 1-acyl-sn-glycero-3-phosphocholine + a fatty acid + H(+). In terms of biological role, snake venom phospholipase A2 (PLA2) that inhibits neuromuscular transmission by blocking acetylcholine release from the nerve termini. PLA2 catalyzes the calcium-dependent hydrolysis of the 2-acyl groups in 3-sn-phosphoglycerides. The polypeptide is Acidic phospholipase A2 beta-bungarotoxin A4 chain (Bungarus multicinctus (Many-banded krait)).